The chain runs to 620 residues: Cryptochrome-1 (620 aa).

In terms of domain architecture, Photolyase/cryptochrome alpha/beta spans 3-132 (VNAVHWFRKG…EVIVRISHTL (130 aa)). 3 consecutive short sequence motifs (LIR) follow at residues 50–54 (NRWRF), 82–87 (DVFPRL), and 151–156 (KRFQTL). Serine 252 is an FAD binding site. 4 consecutive short sequence motifs (LIR) follow at residues 255–260 (LRFGCL), 271–276 (DLYKKV), 285–290 (SLYGQL), and 335–339 (TGFPW). Residue glutamine 289 coordinates FAD. Histidine 355 is an FAD binding site. Positions 379–384 (KVFEEL) match the LIR 8 motif. 387 to 389 (DAD) lines the FAD pocket. Short sequence motifs (LIR) lie at residues 395 to 400 (GSWMWL), 411 to 416 (HCYCPV), 430 to 435 (RRYLPV), 486 to 491 (QIYQQL), and 492 to 497 (SRYRGL). Positions 592 to 620 (GTGISAGKRPNPEEETQSVGPKVQRQSTN) are disordered.

The protein belongs to the DNA photolyase class-1 family. As to quaternary structure, component of the circadian core oscillator, which includes the CRY proteins, CLOCK or NPAS2, BMAL1 or BMAL2, CSNK1E, and the PER proteins. The cofactor is FAD. (6R)-5,10-methylene-5,6,7,8-tetrahydrofolate serves as cofactor. Expressed in the retina. High levels found in ganglion cells of the retina.

The protein resides in the cytoplasm. The protein localises to the nucleus. Its function is as follows. Transcriptional repressor which forms a core component of the circadian clock. The circadian clock, an internal time-keeping system, regulates various physiological processes through the generation of approximately 24 hour circadian rhythms in gene expression, which are translated into rhythms in metabolism and behavior. It is derived from the Latin roots 'circa' (about) and 'diem' (day) and acts as an important regulator of a wide array of physiological functions including metabolism, sleep, body temperature, blood pressure, endocrine, immune, cardiovascular, and renal function. Consists of two major components: the central clock, residing in the suprachiasmatic nucleus (SCN) of the brain, and the peripheral clocks that are present in nearly every tissue and organ system. Both the central and peripheral clocks can be reset by environmental cues, also known as Zeitgebers (German for 'timegivers'). The predominant Zeitgeber for the central clock is light, which is sensed by retina and signals directly to the SCN. The central clock entrains the peripheral clocks through neuronal and hormonal signals, body temperature and feeding-related cues, aligning all clocks with the external light/dark cycle. Circadian rhythms allow an organism to achieve temporal homeostasis with its environment at the molecular level by regulating gene expression to create a peak of protein expression once every 24 hours to control when a particular physiological process is most active with respect to the solar day. Transcription and translation of core clock components (CLOCK, NPAS2, BMAL1, BMAL2, PER1, PER2, PER3, CRY1 and CRY2) plays a critical role in rhythm generation, whereas delays imposed by post-translational modifications (PTMs) are important for determining the period (tau) of the rhythms (tau refers to the period of a rhythm and is the length, in time, of one complete cycle). A diurnal rhythm is synchronized with the day/night cycle, while the ultradian and infradian rhythms have a period shorter and longer than 24 hours, respectively. Disruptions in the circadian rhythms contribute to the pathology of cardiovascular diseases, cancer, metabolic syndromes and aging. A transcription/translation feedback loop (TTFL) forms the core of the molecular circadian clock mechanism. Transcription factors, CLOCK or NPAS2 and BMAL1 or BMAL2, form the positive limb of the feedback loop, act in the form of a heterodimer and activate the transcription of core clock genes and clock-controlled genes (involved in key metabolic processes), harboring E-box elements (5'-CACGTG-3') within their promoters. The core clock genes: PER1/2/3 and CRY1/2 which are transcriptional repressors form the negative limb of the feedback loop and interact with the CLOCK|NPAS2-BMAL1|BMAL2 heterodimer inhibiting its activity and thereby negatively regulating their own expression. This heterodimer also activates nuclear receptors NR1D1, NR1D2, RORA, RORB and RORG, which form a second feedback loop and which activate and repress BMAL1 transcription, respectively. CRY1 and CRY2 have redundant functions but also differential and selective contributions at least in defining the pace of the SCN circadian clock and its circadian transcriptional outputs. More potent transcriptional repressor in cerebellum and liver than CRY2, though more effective in lengthening the period of the SCN oscillator. On its side, CRY2 seems to play a critical role in tuning SCN circadian period by opposing the action of CRY1. With CRY2, is dispensable for circadian rhythm generation but necessary for the development of intercellular networks for rhythm synchrony. Capable of translocating circadian clock core proteins such as PER proteins to the nucleus. Interacts with CLOCK:BMAL1 independently of PER proteins and is found at CLOCK:BMAL1-bound sites, suggesting that CRY may act as a molecular gatekeeper to maintain CLOCK:BMAL1 in a poised and repressed state until the proper time for transcriptional activation. The chain is Cryptochrome-1 (CRY1) from Sylvia borin (Garden warbler).